The sequence spans 393 residues: 4-O-methyl-glucuronoyl methylesterase (393 aa).

A signal peptide spans 1 to 19 (MKLSAALLAIAAFANVASA). The residue at position 20 (Gln-20) is a Pyrrolidone carboxylic acid. The cysteines at positions 22 and 56 are disulfide-linked. Asn-103 and Asn-168 each carry an N-linked (GlcNAc...) asparagine glycan. A GXSYXG catalytic site motif motif is present at residues 203 to 208 (GCSRNG). Disulfide bonds link Cys-204–Cys-340 and Cys-236–Cys-312. Ser-205 serves as the catalytic Nucleophile. Substrate-binding residues include Lys-209, Gln-251, Glu-259, and Trp-303. His-339 (proton donor/acceptor) is an active-site residue.

It belongs to the carbohydrate esterase 15 (CE15) family.

The protein resides in the secreted. The enzyme catalyses a 4-O-methyl-alpha-D-glucuronosyl ester derivative + H2O = 4-O-methyl-alpha-D-glucuronate derivative + an alcohol + H(+). Functionally, glucuronoyl esterase which may play a significant role in biomass degradation, as it is considered to disconnect hemicellulose from lignin through the hydrolysis of the ester bond between 4-O-methyl-D-glucuronic acid residues of glucuronoxylans and aromatic alcohols of lignin. This Schizophyllum commune (strain H4-8 / FGSC 9210) (Split gill fungus) protein is 4-O-methyl-glucuronoyl methylesterase.